The sequence spans 313 residues: C-type lectin domain-containing protein 162 (313 aa).

Positions 1–17 are cleaved as a signal peptide; the sequence is MNIFTLLFIYFLSDTVA. Residues Asn28 and Asn41 are each glycosylated (N-linked (GlcNAc...) asparagine). The C-type lectin domain maps to 28 to 145; sequence NATGCFQFFR…DAMFLPFVCE (118 aa). An intrachain disulfide couples Cys49 to Cys144. Residue Asn213 is glycosylated (N-linked (GlcNAc...) asparagine). The tract at residues 244–313 is disordered; sequence VSQTETEMSR…RSKTIQISRG (70 aa). Residues 250-259 show a composition bias toward basic and acidic residues; sequence EMSRSRKEKE. N-linked (GlcNAc...) asparagine glycans are attached at residues Asn279 and Asn300. Basic and acidic residues predominate over residues 291–304; sequence SKEKREREENETIR.

The protein localises to the secreted. The protein is C-type lectin domain-containing protein 162 (clec-162) of Caenorhabditis elegans.